The sequence spans 485 residues: Protein nucleotidyltransferase YdiU (485 aa).

Residues Gly100, Gly102, Arg103, Lys123, Asp135, Gly136, Arg189, and Arg196 each coordinate ATP. The Proton acceptor role is filled by Asp265. Asn266 and Asp275 together coordinate Mg(2+). Asp275 contributes to the ATP binding site.

The protein belongs to the SELO family. Requires Mg(2+) as cofactor. It depends on Mn(2+) as a cofactor.

The catalysed reaction is L-seryl-[protein] + ATP = 3-O-(5'-adenylyl)-L-seryl-[protein] + diphosphate. It catalyses the reaction L-threonyl-[protein] + ATP = 3-O-(5'-adenylyl)-L-threonyl-[protein] + diphosphate. The enzyme catalyses L-tyrosyl-[protein] + ATP = O-(5'-adenylyl)-L-tyrosyl-[protein] + diphosphate. It carries out the reaction L-histidyl-[protein] + UTP = N(tele)-(5'-uridylyl)-L-histidyl-[protein] + diphosphate. The catalysed reaction is L-seryl-[protein] + UTP = O-(5'-uridylyl)-L-seryl-[protein] + diphosphate. It catalyses the reaction L-tyrosyl-[protein] + UTP = O-(5'-uridylyl)-L-tyrosyl-[protein] + diphosphate. Nucleotidyltransferase involved in the post-translational modification of proteins. It can catalyze the addition of adenosine monophosphate (AMP) or uridine monophosphate (UMP) to a protein, resulting in modifications known as AMPylation and UMPylation. This Trichormus variabilis (strain ATCC 29413 / PCC 7937) (Anabaena variabilis) protein is Protein nucleotidyltransferase YdiU.